The primary structure comprises 926 residues: Alanine--tRNA ligase (926 aa).

Zn(2+)-binding residues include H611, H615, C714, and H718.

It belongs to the class-II aminoacyl-tRNA synthetase family. The cofactor is Zn(2+).

It is found in the cytoplasm. It carries out the reaction tRNA(Ala) + L-alanine + ATP = L-alanyl-tRNA(Ala) + AMP + diphosphate. Catalyzes the attachment of alanine to tRNA(Ala) in a two-step reaction: alanine is first activated by ATP to form Ala-AMP and then transferred to the acceptor end of tRNA(Ala). Also edits incorrectly charged Ser-tRNA(Ala) and Gly-tRNA(Ala) via its editing domain. The sequence is that of Alanine--tRNA ligase from Methanosarcina mazei (strain ATCC BAA-159 / DSM 3647 / Goe1 / Go1 / JCM 11833 / OCM 88) (Methanosarcina frisia).